We begin with the raw amino-acid sequence, 397 residues long: Neuroplastin (397 aa).

Residues 1-28 (MSGSSLPGALALSLLLVSGSLLPGPGAA) form the signal peptide. 3 consecutive Ig-like domains span residues 29–134 (QNAG…PSIT), 148–234 (PRIV…IEVK), and 237–327 (PDIT…ASVS). The Extracellular segment spans residues 29 to 338 (QNAGFVKSPM…VLRVRSHLAP (310 aa)). A disulfide bridge links C52 with C116. The tract at residues 149 to 161 (RIVTSEEVIIRES) is narpin; mediates binding with FGFR1 and has antidepressant-like activity. C169 and C217 form a disulfide bridge. N-linked (GlcNAc...) asparagine glycans are attached at residues N170, N196, N228, N283, N295, and N316. Cysteines 258 and 315 form a disulfide. Residues 339-359 (LWPFLGILAEIIILVVIIVVY) form a helical membrane-spanning segment. At 360–397 (EKRKRPDEVPDDDEPAGPMKTNSTNNHKDKNLRQRNTN) the chain is on the cytoplasmic side. A disordered region spans residues 364-397 (RPDEVPDDDEPAGPMKTNSTNNHKDKNLRQRNTN).

Interacts with ATP2B1; this interaction stabilizes ATP2B1 and increases ATPase activity; this interaction controls T cell calcium homeostasis following T cell activation. Interacts with XKR8; promoting its localization at the cell membrane. Post-translationally, N-glycosylated. As to expression, isoform 1 and isoform 2 are widely expressed with variable levels in brain. Isoform 1 is expressed in cerebellum and midbrain. Isoform 1 and isoform 2 are expressed in cerebral cortex, hippocampus and striatum. Isoform 2 is more abundant in the cerebral cortex than isoform 1.

The protein localises to the cell membrane. It localises to the postsynaptic density. Its function is as follows. Probable homophilic and heterophilic cell adhesion molecule involved in long term potentiation at hippocampal excitatory synapses through activation of p38MAPK. May also regulate neurite outgrowth by activating the FGFR1 signaling pathway. May play a role in synaptic plasticity. Also acts as a chaperone for ATP2B1; stabilizes ATP2B1 and increases its ATPase activity. Promotes localization of XKR8 at the cell membrane. The chain is Neuroplastin (Nptn) from Mus musculus (Mouse).